We begin with the raw amino-acid sequence, 275 residues long: Peflin (275 aa).

Repeat copies occupy residues 21–29, 31–39, 41–49, 50–59, 60–68, 76–84, 85–91, and 92–100. Disordered stretches follow at residues 21–45 and 59–103; these read PPGG…PGGG and SAGG…GGVP. The tract at residues 21–100 is 8 X 9 AA approximate tandem repeat of [AP]-P-G-G-P-Y-G-G-P-P; it reads PPGGYYPGPP…GTQPGHYGQG (80 aa). The span at 31 to 45 shows a compositional bias: gly residues; sequence HGGGQYGSGLPPGGG. The span at 59–70 shows a compositional bias: low complexity; sequence SAGGVPSGTPSG. EF-hand domains are found at residues 105–140, 146–174, 172–207, 208–244, and 245–274; these read NVDP…SNWS, TCLM…WKFL, KFLQ…MGYN, LSPQ…LQVL, and TEAF…ASRM. 5 residues coordinate Ca(2+): aspartate 118, aspartate 120, serine 122, tyrosine 124, and glutamate 129. Positions 185, 187, 189, 191, and 196 each coordinate Ca(2+). The interval 195–275 is required for interaction with PDCD6; it reads TELQQALSQM…FVTMTASRML (81 aa).

Heterodimer; heterodimerizes (via the EF-hand 5) with PDCD6. Dissociates from PDCD6 in presence of calcium. In terms of processing, ubiquitinated by the BCR(KLHL12) E3 ubiquitin ligase complex.

It localises to the cytoplasm. Its subcellular location is the endoplasmic reticulum. The protein localises to the membrane. It is found in the cytoplasmic vesicle. The protein resides in the COPII-coated vesicle membrane. Functionally, calcium-binding protein that acts as an adapter that bridges unrelated proteins or stabilizes weak protein-protein complexes in response to calcium. Together with PDCD6, acts as a calcium-dependent adapter for the BCR(KLHL12) complex, a complex involved in endoplasmic reticulum (ER)-Golgi transport by regulating the size of COPII coats. In response to cytosolic calcium increase, the heterodimer formed with PDCD6 interacts with, and bridges together the BCR(KLHL12) complex and SEC31 (SEC31A or SEC31B), promoting monoubiquitination of SEC31 and subsequent collagen export, which is required for neural crest specification. Its role in the heterodimer formed with PDCD6 is however unclear: some evidence shows that PEF1 and PDCD6 work together and promote association between PDCD6 and SEC31 in presence of calcium. Other reports show that PEF1 dissociates from PDCD6 in presence of calcium, and may act as a negative regulator of PDCD6. Also acts as a negative regulator of ER-Golgi transport; possibly by inhibiting interaction between PDCD6 and SEC31. This is Peflin from Mus musculus (Mouse).